The primary structure comprises 193 residues: Holliday junction branch migration complex subunit RuvA (193 aa).

The segment at 1-63 is domain I; that stretch reads MIHHLKGQLI…EDSHTLYGFA (63 aa). A domain II region spans residues 64 to 142; the sequence is EKSEREIFRL…KVLGDDEVFV (79 aa). The flexible linker stretch occupies residues 143-145; it reads SQS. Residues 145–193 form a domain III region; the sequence is SNTNKEEALSALEILGYNRRQAGKVVEKILKEDPESTVESIIKMALKKL.

It belongs to the RuvA family. As to quaternary structure, homotetramer. Forms an RuvA(8)-RuvB(12)-Holliday junction (HJ) complex. HJ DNA is sandwiched between 2 RuvA tetramers; dsDNA enters through RuvA and exits via RuvB. An RuvB hexamer assembles on each DNA strand where it exits the tetramer. Each RuvB hexamer is contacted by two RuvA subunits (via domain III) on 2 adjacent RuvB subunits; this complex drives branch migration. In the full resolvosome a probable DNA-RuvA(4)-RuvB(12)-RuvC(2) complex forms which resolves the HJ.

Its subcellular location is the cytoplasm. In terms of biological role, the RuvA-RuvB-RuvC complex processes Holliday junction (HJ) DNA during genetic recombination and DNA repair, while the RuvA-RuvB complex plays an important role in the rescue of blocked DNA replication forks via replication fork reversal (RFR). RuvA specifically binds to HJ cruciform DNA, conferring on it an open structure. The RuvB hexamer acts as an ATP-dependent pump, pulling dsDNA into and through the RuvAB complex. HJ branch migration allows RuvC to scan DNA until it finds its consensus sequence, where it cleaves and resolves the cruciform DNA. The polypeptide is Holliday junction branch migration complex subunit RuvA (Christiangramia forsetii (strain DSM 17595 / CGMCC 1.15422 / KT0803) (Gramella forsetii)).